Consider the following 578-residue polypeptide: Poly(A) RNA polymerase cid13 (578 aa).

Mg(2+)-binding residues include aspartate 110 and aspartate 112. The 56-residue stretch at 275–330 (SLGILFVEFFRFFGYLFDYEHFVLSIRHGTFLSKRAKGWQFQLNNFLCVEEPFHTS) folds into the PAP-associated domain. Residues 495 to 565 (SHHFDERHGG…SEVVSPVSLH (71 aa)) form a disordered region. Positions 496-510 (HHFDERHGGDRHEKN) are enriched in basic and acidic residues. The segment covering 516–527 (RYSRNKFHKKKQ) has biased composition (basic residues). Residues 547–565 (NSPPSNSSSSEVVSPVSLH) are compositionally biased toward low complexity.

The protein belongs to the DNA polymerase type-B-like family. Interacts with pab1. Mg(2+) serves as cofactor. Requires Mn(2+) as cofactor.

It localises to the cytoplasm. It is found in the nucleus. The enzyme catalyses RNA(n) + ATP = RNA(n)-3'-adenine ribonucleotide + diphosphate. Its function is as follows. Polymerase that creates the 3' poly(A) tail of suc22 mRNA. This is Poly(A) RNA polymerase cid13 (cid13) from Schizosaccharomyces pombe (strain 972 / ATCC 24843) (Fission yeast).